The following is a 185-amino-acid chain: UPF0301 protein HCH_00550 (185 aa).

This sequence belongs to the UPF0301 (AlgH) family.

The sequence is that of UPF0301 protein HCH_00550 from Hahella chejuensis (strain KCTC 2396).